The chain runs to 671 residues: DNA ligase (671 aa).

Residues D32–D36, S81–L82, and E113 each bind NAD(+). Residue K115 is the N6-AMP-lysine intermediate of the active site. The NAD(+) site is built by R136, E173, K290, and K314. Zn(2+) is bound by residues C408, C411, C426, and C432. One can recognise a BRCT domain in the interval E593–S671.

The protein belongs to the NAD-dependent DNA ligase family. LigA subfamily. Mg(2+) serves as cofactor. Mn(2+) is required as a cofactor.

It carries out the reaction NAD(+) + (deoxyribonucleotide)n-3'-hydroxyl + 5'-phospho-(deoxyribonucleotide)m = (deoxyribonucleotide)n+m + AMP + beta-nicotinamide D-nucleotide.. Functionally, DNA ligase that catalyzes the formation of phosphodiester linkages between 5'-phosphoryl and 3'-hydroxyl groups in double-stranded DNA using NAD as a coenzyme and as the energy source for the reaction. It is essential for DNA replication and repair of damaged DNA. This chain is DNA ligase, found in Escherichia coli O9:H4 (strain HS).